A 1401-amino-acid chain; its full sequence is DNA-directed RNA polymerase subunit beta'' (1401 aa).

Zn(2+) is bound by residues Cys-224, Cys-294, Cys-301, and Cys-304.

This sequence belongs to the RNA polymerase beta' chain family. RpoC2 subfamily. As to quaternary structure, in plastids the minimal PEP RNA polymerase catalytic core is composed of four subunits: alpha, beta, beta', and beta''. When a (nuclear-encoded) sigma factor is associated with the core the holoenzyme is formed, which can initiate transcription. Zn(2+) serves as cofactor.

The protein resides in the plastid. It localises to the chloroplast. It carries out the reaction RNA(n) + a ribonucleoside 5'-triphosphate = RNA(n+1) + diphosphate. In terms of biological role, DNA-dependent RNA polymerase catalyzes the transcription of DNA into RNA using the four ribonucleoside triphosphates as substrates. In Nymphaea alba (White water-lily), this protein is DNA-directed RNA polymerase subunit beta''.